Consider the following 317-residue polypeptide: Olfactory receptor 10AD1 (317 aa).

The Extracellular segment spans residues 1–25 (MLRNGSIVTEFILVGFQQSSTSTRA). Asparagine 4 is a glycosylation site (N-linked (GlcNAc...) asparagine). The chain crosses the membrane as a helical span at residues 26 to 46 (LLFALFLALYSLTMAMNGLII). The Cytoplasmic segment spans residues 47-55 (FITSWTDPK). Residues 56-76 (LNSPMYFFLGHLSLLDVCFIT) traverse the membrane as a helical segment. Topologically, residues 77-100 (TTIPQMLIHLVVRDHIVSFVCCMT) are extracellular. Residues cysteine 98 and cysteine 190 are joined by a disulfide bond. A helical membrane pass occupies residues 101-121 (QMYFVFCVGVAECILLAFMAY). Residues 122 to 140 (DRYVAICYPLNYVPIISQK) are Cytoplasmic-facing. The helical transmembrane segment at 141-161 (VCVRLVGTAWFFGLINGIFLE) threads the bilayer. Residues 162–198 (YISFREPFRRDNHIESFFCEAPIVIGLSCGDPQFSLW) lie on the Extracellular side of the membrane. The chain crosses the membrane as a helical span at residues 199–218 (AIFADAIVVILSPMVLTVTS). The Cytoplasmic portion of the chain corresponds to 219-238 (YVHILATILSKASSSGRGKT). A helical membrane pass occupies residues 239–259 (FSTCASHLTVVIFLYTSAMFS). Residues 260–272 (YMNPHSTHGPDKD) are Extracellular-facing. Residues 273 to 293 (KPFSLLYTIITPMCNPIIYSF) traverse the membrane as a helical segment. At 294–317 (RNKEIKEAMVRALGRTRLAQPQSV) the chain is on the cytoplasmic side.

This sequence belongs to the G-protein coupled receptor 1 family.

Its subcellular location is the cell membrane. In terms of biological role, odorant receptor. The protein is Olfactory receptor 10AD1 (OR10AD1) of Homo sapiens (Human).